The following is a 142-amino-acid chain: Cytochrome b5-related protein (142 aa).

Residues 16-100 (PTYRNSAPVT…IAKYKVRDAY (85 aa)) form the Cytochrome b5 heme-binding domain. Positions 59 and 82 each coordinate heme.

The protein belongs to the cytochrome b5 family.

In terms of biological role, may play a role in muscle cell metabolism. This is Cytochrome b5-related protein (Cyt-b5-r) from Drosophila virilis (Fruit fly).